The following is a 540-amino-acid chain: Chaperonin GroEL (540 aa).

ATP-binding positions include 30-33 (TLGP), Lys-51, 87-91 (DGTTT), Gly-415, and Asp-495.

It belongs to the chaperonin (HSP60) family. Forms a cylinder of 14 subunits composed of two heptameric rings stacked back-to-back. Interacts with the co-chaperonin GroES.

The protein localises to the cytoplasm. The catalysed reaction is ATP + H2O + a folded polypeptide = ADP + phosphate + an unfolded polypeptide.. In terms of biological role, together with its co-chaperonin GroES, plays an essential role in assisting protein folding. The GroEL-GroES system forms a nano-cage that allows encapsulation of the non-native substrate proteins and provides a physical environment optimized to promote and accelerate protein folding. The sequence is that of Chaperonin GroEL from Rhodothermus marinus (Rhodothermus obamensis).